A 157-amino-acid polypeptide reads, in one-letter code: SsrA-binding protein (157 aa).

Residues 134-157 (HDKRESEKKRDWGREKGRLLRARG) form a disordered region. A compositionally biased stretch (basic and acidic residues) spans 135-151 (DKRESEKKRDWGREKGR).

It belongs to the SmpB family.

It localises to the cytoplasm. In terms of biological role, required for rescue of stalled ribosomes mediated by trans-translation. Binds to transfer-messenger RNA (tmRNA), required for stable association of tmRNA with ribosomes. tmRNA and SmpB together mimic tRNA shape, replacing the anticodon stem-loop with SmpB. tmRNA is encoded by the ssrA gene; the 2 termini fold to resemble tRNA(Ala) and it encodes a 'tag peptide', a short internal open reading frame. During trans-translation Ala-aminoacylated tmRNA acts like a tRNA, entering the A-site of stalled ribosomes, displacing the stalled mRNA. The ribosome then switches to translate the ORF on the tmRNA; the nascent peptide is terminated with the 'tag peptide' encoded by the tmRNA and targeted for degradation. The ribosome is freed to recommence translation, which seems to be the essential function of trans-translation. The protein is SsrA-binding protein of Nitrobacter hamburgensis (strain DSM 10229 / NCIMB 13809 / X14).